A 310-amino-acid polypeptide reads, in one-letter code: tRNA uridine(34) hydroxylase (310 aa).

Residues 124–218 enclose the Rhodanese domain; that stretch reads SDPEVLLIDT…YFEEVPQEES (95 aa). Catalysis depends on cysteine 178, which acts as the Cysteine persulfide intermediate.

This sequence belongs to the TrhO family.

It catalyses the reaction uridine(34) in tRNA + AH2 + O2 = 5-hydroxyuridine(34) in tRNA + A + H2O. In terms of biological role, catalyzes oxygen-dependent 5-hydroxyuridine (ho5U) modification at position 34 in tRNAs. The protein is tRNA uridine(34) hydroxylase of Pseudomonas putida (strain GB-1).